A 123-amino-acid chain; its full sequence is Large ribosomal subunit protein bL12 (123 aa).

Belongs to the bacterial ribosomal protein bL12 family. Homodimer. Part of the ribosomal stalk of the 50S ribosomal subunit. Forms a multimeric L10(L12)X complex, where L10 forms an elongated spine to which 2 to 4 L12 dimers bind in a sequential fashion. Binds GTP-bound translation factors.

In terms of biological role, forms part of the ribosomal stalk which helps the ribosome interact with GTP-bound translation factors. Is thus essential for accurate translation. In Neisseria gonorrhoeae (strain NCCP11945), this protein is Large ribosomal subunit protein bL12.